Reading from the N-terminus, the 460-residue chain is Ribosomal protein uS12 methylthiotransferase RimO (460 aa).

Residues 9-119 (PKVGFVSLGC…VMEAVHAALP (111 aa)) form the MTTase N-terminal domain. C18, C54, C83, C150, C154, and C157 together coordinate [4Fe-4S] cluster. A Radical SAM core domain is found at 136-374 (LTPRHYAYLK…AKQAEISALR (239 aa)). Residues 376 to 444 (EAKIGSVQQC…EHDLFGDALP (69 aa)) form the TRAM domain.

The protein belongs to the methylthiotransferase family. RimO subfamily. [4Fe-4S] cluster is required as a cofactor.

Its subcellular location is the cytoplasm. It catalyses the reaction L-aspartate(89)-[ribosomal protein uS12]-hydrogen + (sulfur carrier)-SH + AH2 + 2 S-adenosyl-L-methionine = 3-methylsulfanyl-L-aspartate(89)-[ribosomal protein uS12]-hydrogen + (sulfur carrier)-H + 5'-deoxyadenosine + L-methionine + A + S-adenosyl-L-homocysteine + 2 H(+). In terms of biological role, catalyzes the methylthiolation of an aspartic acid residue of ribosomal protein uS12. The chain is Ribosomal protein uS12 methylthiotransferase RimO from Xanthomonas oryzae pv. oryzae (strain PXO99A).